Here is a 1711-residue protein sequence, read N- to C-terminus: Protein chiffon (1711 aa).

Disordered stretches follow at residues 1–31, 87–129, and 244–307; these read MQPQ…AATP, KPEV…SRAD, and TKSK…IDSS. Positions 1 to 400 are sufficient for interaction with and activation of Cdc7; the sequence is MQPQSDKQSA…PALREKSKRI (400 aa). 2 stretches are compositionally biased toward low complexity: residues 10–30 and 97–109; these read ASRL…TAAT and TPGT…TPTS. A phosphoserine mark is found at S306 and S307. The DBF4-type zinc-finger motif lies at 307–356; that stretch reads SEKQGGVCEICKLEYDILNIHLQSKDHELFAKNSDNFLALDTLIQSSADV. Residues C314, C317, H327, and H333 each contribute to the Zn(2+) site. The segment covering 365–378 has biased composition (acidic residues); the sequence is VESELDMDVDESLS. 11 disordered regions span residues 365 to 507, 531 to 647, 733 to 771, 791 to 817, 908 to 945, 1005 to 1025, 1055 to 1157, 1271 to 1290, 1303 to 1329, 1343 to 1370, and 1383 to 1644; these read VESE…DSPS, MFPR…KPQL, LDEE…REQR, TEVK…KVKQ, QDKG…YKNK, RSTS…CRNK, QRQD…RNQS, ESEG…PPTD, MGSA…RMSN, LKSN…ALPD, and LHPI…SKYA. Phosphoserine occurs at positions 406, 407, 417, 432, and 435. The span at 429–439 shows a compositional bias: polar residues; it reads QGNSPGSLSEL. The span at 445–454 shows a compositional bias: low complexity; the sequence is PTTAAATPTT. Residue S467 is modified to Phosphoserine. The a.T hook DNA-binding region spans 493-505; sequence PRGRGRPPNQVDS. The segment covering 537–546 has biased composition (polar residues); that stretch reads VPTTRSSSEL. Phosphoserine is present on residues S542, S543, and S544. Positions 549–560 are enriched in basic and acidic residues; that stretch reads DVDRQTTSDVRG. A compositionally biased stretch (low complexity) spans 563–575; it reads SISSASLDTSTSE. The span at 588–601 shows a compositional bias: basic residues; it reads IRKRAQAVGRRRKV. Over residues 793 to 812 the composition is skewed to polar residues; sequence VKTSPSKSRTKIQKPSSPTK. Residues 908–932 show a composition bias toward basic and acidic residues; sequence QDKGEQIKLEDQKPAPKKEVKKEEE. The segment covering 1006 to 1018 has biased composition (low complexity); sequence STSSSSCSNSQRS. T1081 is modified (phosphothreonine). Phosphoserine occurs at positions 1091 and 1092. The span at 1092 to 1101 shows a compositional bias: polar residues; that stretch reads SPRTTRSQAA. The segment covering 1398 to 1407 has biased composition (low complexity); sequence TTTTTTTTTT. The sufficient for interaction with Gcn5 stretch occupies residues 1400-1695; it reads TTTTTTTTSA…NAWRRTQRRA (296 aa). The span at 1435–1445 shows a compositional bias: basic and acidic residues; sequence ADDKQNSREDA. Acidic residues-rich tracts occupy residues 1453 to 1475 and 1483 to 1518; these read DVDE…DETM and QDVE…EEQD. Polar residues-rich tracts occupy residues 1536–1545 and 1556–1591; these read ISVTTPPEDS and HNGQ…SCIS.

In terms of assembly, component of the Dbf4-dependent kinase (DDK) complex consisting of Cdc7 and the Dbf4 ortholog chif. Interacts with Cdc7; the interaction is direct. Interacts with CG5790. Component of the Chiffon histone acetyltransferase (CHAT) complex consisting of Ada3, Sgf29, Gcn5, chif/chiffon and Ada2b (Isoform A). Interacts (via C-terminus) with Gcn5; the interaction is direct but weak in the absence of other CHAT components. May be proteolytically cleaved to produce a N-terminal 50 kDa product.

It localises to the nucleus. Functionally, a bicistronic gene producing two proteins that are components of different complexes and have separate properties and functions. Full-length protein is proteolytically cleaved, producing a ~50kDa N-terminal product (Chiffon-A) that forms part of the DDK complex; it is unclear if the C-terminal proteolytic product is stable or functional. Alternative initiation from an internal ribosome entry site produces a C-terminal ~48kDa product (Chiffon-B or Isoform E) that forms part of the CHAT complex. Involved in regulation of gene expression during embryonic development. Regulatory component of the Dbf4-dependent kinase (DDK) complex. Required for the amplification stage, but not the preceding endoreplication stage of DNA replication in egg chamber follicle cells of the ovary. May be involved in initiation of DNA replication; activation of the chorion gene origins. May have a role in eye and thoracic bristle development. Required for female fertility; is not required for oogenesis but is required maternally for early embryo development. In terms of biological role, component of the CHAT histone acetyltransferase complex, which predominantly acetylates histone H3. As part of the CHAT complex involved in acetylation of histone H3 on 'Lys-10' (H3K9ac), 'Lys-15' (H3K14ac) and 'Lys-19' (H3K18ac), but not 'Lys-25' (H3K24ac). May also regulate other histone acetyltransferase complexes. Essential for viability. Not required for early stages of embryonic development. May be involved in zygotic genome activation during embryogenesis. The protein is Protein chiffon of Drosophila melanogaster (Fruit fly).